We begin with the raw amino-acid sequence, 341 residues long: MRIGVLTSGGDCPGLNAVIRSVVHRAVVDHGDEVIGFRDGWKGLLECDYLKLDLDAVGGILARGGTILGSSRVRPEHLRDGVERARGHVEELGLDAIIPIGGEGTLKAARLLSDNGLPIVGVPKTIDNDIAVTDVTFGFDTAVTVATEALDRLKTTAESHQRVLIVEVMGRHTGWIALHSGMAAGAHAVVVPERPFDIDELTAKVGERFSAGKRFAIVVAAEGAKPKAGTMDFDEGGKDVYGHERFAGIARQLSIELEERLGKEARPVILGHVQRGGTPTAYDRVLATRFGWHAVEAVHRGEFGKMTALRGTDIEMVSLADAVESLKTVPDARYAEAECVL.

Residues Gly10, 72–73 (RV), and 102–105 (GEGT) each bind ATP. Glu103 contacts Mg(2+). Residues 125–127 (TID), Arg162, 169–171 (MGR), Glu222, Arg266, and 272–275 (HVQR) each bind substrate. Asp127 (proton acceptor) is an active-site residue.

Belongs to the phosphofructokinase type A (PFKA) family. Mixed-substrate PFK group III subfamily. Homodimer or homotetramer. Requires Mg(2+) as cofactor.

The protein resides in the cytoplasm. The enzyme catalyses beta-D-fructose 6-phosphate + ATP = beta-D-fructose 1,6-bisphosphate + ADP + H(+). It functions in the pathway carbohydrate degradation; glycolysis; D-glyceraldehyde 3-phosphate and glycerone phosphate from D-glucose: step 3/4. Functionally, catalyzes the phosphorylation of D-fructose 6-phosphate to fructose 1,6-bisphosphate by ATP, the first committing step of glycolysis. This is ATP-dependent 6-phosphofructokinase 3 from Streptomyces coelicolor (strain ATCC BAA-471 / A3(2) / M145).